Consider the following 179-residue polypeptide: Large ribosomal subunit protein uL5 (179 aa).

The protein belongs to the universal ribosomal protein uL5 family. As to quaternary structure, part of the 50S ribosomal subunit; part of the 5S rRNA/L5/L18/L25 subcomplex. Contacts the 5S rRNA and the P site tRNA. Forms a bridge to the 30S subunit in the 70S ribosome.

This is one of the proteins that bind and probably mediate the attachment of the 5S RNA into the large ribosomal subunit, where it forms part of the central protuberance. In the 70S ribosome it contacts protein S13 of the 30S subunit (bridge B1b), connecting the 2 subunits; this bridge is implicated in subunit movement. Contacts the P site tRNA; the 5S rRNA and some of its associated proteins might help stabilize positioning of ribosome-bound tRNAs. The polypeptide is Large ribosomal subunit protein uL5 (Halalkalibacterium halodurans (strain ATCC BAA-125 / DSM 18197 / FERM 7344 / JCM 9153 / C-125) (Bacillus halodurans)).